Reading from the N-terminus, the 375-residue chain is UPF0612 protein C569.003 (375 aa).

This sequence belongs to the UPF0612 family.

Its subcellular location is the cytoplasm. In Schizosaccharomyces pombe (strain 972 / ATCC 24843) (Fission yeast), this protein is UPF0612 protein C569.003.